The primary structure comprises 525 residues: GMP synthase [glutamine-hydrolyzing] (525 aa).

The 199-residue stretch at 9–207 (RILILDFGSQ…ILDICECEAL (199 aa)) folds into the Glutamine amidotransferase type-1 domain. C86 acts as the Nucleophile in catalysis. Residues H181 and E183 contribute to the active site. In terms of domain architecture, GMPS ATP-PPase spans 208–400 (WTPSKIAEDA…LGLPYDMVYR (193 aa)). 235 to 241 (SGGVDSS) lines the ATP pocket.

As to quaternary structure, homodimer.

The catalysed reaction is XMP + L-glutamine + ATP + H2O = GMP + L-glutamate + AMP + diphosphate + 2 H(+). It participates in purine metabolism; GMP biosynthesis; GMP from XMP (L-Gln route): step 1/1. Catalyzes the synthesis of GMP from XMP. This Pseudomonas fluorescens (strain SBW25) protein is GMP synthase [glutamine-hydrolyzing].